We begin with the raw amino-acid sequence, 161 residues long: MSTESAMFLAPIPTTDAVPPVIERLVEQHQAAWVDQDSIDDWLAGGGDCVLFIAGDPVRFPECVDVAVVLPELQRVFFNGFRIGVAKREREHEDVLANRFGTQRRPSLVFLRDGAYVSVIAGMRDWDEYVREVRRALAMPTSRPPSIGIPVISAAAGGSCH.

The protein belongs to the HupG/HyaE family.

This is Hydrogenase expression/formation protein HoxO (hoxO) from Cupriavidus necator (strain ATCC 17699 / DSM 428 / KCTC 22496 / NCIMB 10442 / H16 / Stanier 337) (Ralstonia eutropha).